Reading from the N-terminus, the 607-residue chain is Rap1 GTPase-GDP dissociation stimulator 1 (607 aa).

ARM repeat units lie at residues 89–131 (GLIS…DQAG) and 170–211 (DSLQ…NLAE). A prevents binding to prenylated RHOA region spans residues 122–170 (EGRSAVDQAGGAQIVIDHLRSLCGRTDPASEKLMTVFCGMLMNYSNEND). Position 230 is an N6-acetyllysine (lysine 230). ARM repeat units lie at residues 347-390 (DGNC…NLAI), 391-431 (PVVN…MLID), and 479-519 (SKDV…LIAA).

Interacts with RABL3. Interacts with RHOT1. In terms of assembly, interacts with unprenylated RHOA; the interaction is direct. Interacts with RAP1A. Interacts with KRAS. Interacts with RAC1. Interacts with RAP1B. Preferentially interacts with unprenylated GTPases that will become geranylgeranylated. May also interact with prenylated GTPases. As to quaternary structure, interacts with prenylated RHOA; the interaction is direct and in a 1:1 stoichiometry. Interacts with RAP1A. Interacts with KRAS. Interacts with RAC1. Interacts with RAP1B. Preferentially interacts with prenylated GTPases. Post-translationally, serotonylated on Gln residues by TGM2 in response to hypoxia, leading to its inactivation.

Its subcellular location is the cytoplasm. It is found in the cytosol. It localises to the endoplasmic reticulum. The protein localises to the mitochondrion. The protein resides in the nucleus. Its function is as follows. Acts as a GEF (guanine nucleotide exchange factor) for the Rho family of small GTP-binding proteins (G proteins) that stimulates the dissociation of GDP to enable subsequent binding of GTP. Additionally, appears to chaperone the processing and/or trafficking of small GTPases containing a C-terminal polybasic region independently of GEF activity. Targets include RAP1A/RAP1B, RHOA, RHOB, RHOC, RAC1 and KRAS. Regulates mitochondrial dynamics by controlling RHOT function to promote mitochondrial fission during high calcium conditions. Able to promote the Ca(2+) release from the endoplasmic reticulum via both inositol trisphosphate (Ins3P) and ryanodine sensitive receptors leading to a enhanced mitochondrial Ca(2+) uptake. Acts as a GEF (guanine nucleotide exchange factor) for unprenylated RHOA. Chaperones the entry and passage of small GTPases through the prenylation pathway. Recognizes the last amino acid in the GTPase C-terminal CAAX motif with a preference for 'Leu' over 'Met', indicating involvement in the geranylgeranylation pathway. May also recognize prenylated GTPases. Functionally, acts as a GEF (guanine nucleotide exchange factor) for prenylated RHOA. Acts as a GEF for RHOC. Chaperones the downstream trafficking and/or processing of small newly prenylated GTPases. Escorts RAC1 to the nucleus. The polypeptide is Rap1 GTPase-GDP dissociation stimulator 1 (Mus musculus (Mouse)).